The sequence spans 520 residues: Amine oxidase [flavin-containing] B (520 aa).

Topologically, residues 1–489 (MNSKCDVVVV…TFLERHLPSV (489 aa)) are cytoplasmic. K52 carries the post-translational modification N6-acetyllysine. An S-8alpha-FAD cysteine modification is found at C397. The helical; Anchor for type IV membrane protein transmembrane segment at 490-516 (PGLLRLIRLTTVVSAVALGFLAQKRGL) threads the bilayer. Residues 517–520 (LLRI) are Mitochondrial intermembrane-facing.

Belongs to the flavin monoamine oxidase family. As to quaternary structure, monomer, homo- or heterodimer (containing two subunits of similar size). Each subunit contains a covalently bound flavin. Enzymatically active as monomer. Requires FAD as cofactor.

It localises to the mitochondrion outer membrane. The enzyme catalyses a secondary aliphatic amine + O2 + H2O = a primary amine + an aldehyde + H2O2. It carries out the reaction (R)-adrenaline + O2 + H2O = (R)-3,4-dihydroxymandelaldehyde + methylamine + H2O2. The catalysed reaction is a primary methyl amine + O2 + H2O = an aldehyde + H2O2 + NH4(+). It catalyses the reaction benzylamine + O2 + H2O = benzaldehyde + H2O2 + NH4(+). The enzyme catalyses dopamine + O2 + H2O = 3,4-dihydroxyphenylacetaldehyde + H2O2 + NH4(+). It carries out the reaction tyramine + O2 + H2O = (4-hydroxyphenyl)acetaldehyde + H2O2 + NH4(+). The catalysed reaction is (R)-noradrenaline + O2 + H2O = (R)-3,4-dihydroxymandelaldehyde + H2O2 + NH4(+). It catalyses the reaction 2-phenylethylamine + O2 + H2O = 2-phenylacetaldehyde + H2O2 + NH4(+). The enzyme catalyses N-acetylputrescine + O2 + H2O = 4-acetamidobutanal + H2O2 + NH4(+). Catalyzes the oxidative deamination of primary and some secondary amines such as neurotransmitters, and exogenous amines including the tertiary amine, neurotoxin 1-methyl-4-phenyl-1,2,3,6-tetrahydropyridine (MPTP), with concomitant reduction of oxygen to hydrogen peroxide and participates in the metabolism of neuroactive and vasoactive amines in the central nervous system and peripheral tissues. Preferentially degrades benzylamine and phenylethylamine. This is Amine oxidase [flavin-containing] B from Cavia porcellus (Guinea pig).